Consider the following 392-residue polypeptide: Bifunctional enzyme IspD/IspF (392 aa).

2 2-C-methyl-D-erythritol 4-phosphate cytidylyltransferase regions span residues 1-234 (MTES…MMRT) and 1-235 (MTES…MRTA). Positions 235–392 (AVGMGYDVHR…AVATIQLPET (158 aa)) are 2-C-methyl-D-erythritol 2,4-cyclodiphosphate synthase. Positions 241 and 243 each coordinate a divalent metal cation. Residues 241-243 (DVH) and 267-268 (HS) contribute to the 4-CDP-2-C-methyl-D-erythritol 2-phosphate site. His-275 contributes to the a divalent metal cation binding site. Residues 289 to 291 (DIG), 365 to 368 (TTTE), Phe-372, and Arg-375 contribute to the 4-CDP-2-C-methyl-D-erythritol 2-phosphate site.

It in the N-terminal section; belongs to the IspD/TarI cytidylyltransferase family. IspD subfamily. In the C-terminal section; belongs to the IspF family. It depends on a divalent metal cation as a cofactor.

The enzyme catalyses 2-C-methyl-D-erythritol 4-phosphate + CTP + H(+) = 4-CDP-2-C-methyl-D-erythritol + diphosphate. It catalyses the reaction 4-CDP-2-C-methyl-D-erythritol 2-phosphate = 2-C-methyl-D-erythritol 2,4-cyclic diphosphate + CMP. The protein operates within isoprenoid biosynthesis; isopentenyl diphosphate biosynthesis via DXP pathway; isopentenyl diphosphate from 1-deoxy-D-xylulose 5-phosphate: step 2/6. It functions in the pathway isoprenoid biosynthesis; isopentenyl diphosphate biosynthesis via DXP pathway; isopentenyl diphosphate from 1-deoxy-D-xylulose 5-phosphate: step 4/6. In terms of biological role, bifunctional enzyme that catalyzes the formation of 4-diphosphocytidyl-2-C-methyl-D-erythritol from CTP and 2-C-methyl-D-erythritol 4-phosphate (MEP) (IspD), and catalyzes the conversion of 4-diphosphocytidyl-2-C-methyl-D-erythritol 2-phosphate (CDP-ME2P) to 2-C-methyl-D-erythritol 2,4-cyclodiphosphate (ME-CPP) with a corresponding release of cytidine 5-monophosphate (CMP) (IspF). The chain is Bifunctional enzyme IspD/IspF from Sphingopyxis alaskensis (strain DSM 13593 / LMG 18877 / RB2256) (Sphingomonas alaskensis).